Here is a 316-residue protein sequence, read N- to C-terminus: MTSLTNTIGPDVPGPALTTAGGDVPDYFALLKPRVMVLVIFTALVGMVVSQGHVQPAIGAISLLAIAVGAGASGCLNMWWDADIDAVMSRTATRPIPSGRITSEEALGFGLFLSVASVVVLGLAANLLAAALLAFTIVFYAVVYSMWLKRATAQNIVIGGAAGALPPVIGQAVVTGSIGIESLILFAIIFIWTPPHFWALALIKADEYARAGIPMMPNVAGPASTRRQIVWYSLLLAPLGLVPVALGFGGLVYAVVGLVGGLGMVAFSIRVLRNPEGDAERRAAMGMFGFSILYLFALFSALLAEQSFGLFRPVLG.

8 consecutive transmembrane segments (helical) span residues 35–55, 56–76, 119–139, 156–176, 183–203, 229–246, 250–272, and 283–303; these read VMVLVIFTALVGMVVSQGHVQ, PAIGAISLLAIAVGAGASGCL, VVLGLAANLLAAALLAFTIVF, IVIGGAAGALPPVIGQAVVTG, LILFAIIFIWTPPHFWALALI, IVWYSLLLAPLGLVPVAL, GLVYAVVGLVGGLGMVAFSIRVL, and AAMGMFGFSILYLFALFSALL.

This sequence belongs to the UbiA prenyltransferase family. Protoheme IX farnesyltransferase subfamily.

The protein resides in the cell inner membrane. The enzyme catalyses heme b + (2E,6E)-farnesyl diphosphate + H2O = Fe(II)-heme o + diphosphate. It participates in porphyrin-containing compound metabolism; heme O biosynthesis; heme O from protoheme: step 1/1. Converts heme B (protoheme IX) to heme O by substitution of the vinyl group on carbon 2 of heme B porphyrin ring with a hydroxyethyl farnesyl side group. This Methylobacterium radiotolerans (strain ATCC 27329 / DSM 1819 / JCM 2831 / NBRC 15690 / NCIMB 10815 / 0-1) protein is Protoheme IX farnesyltransferase.